A 197-amino-acid chain; its full sequence is Secreted RxLR effector protein 48 (197 aa).

An N-terminal signal peptide occupies residues 1–27 (MCCVSWNWVLACTFLLIFLSWWNCCND). The RxLR-dEER signature appears at 58 to 79 (RLLRVNLAANAEVLTHEIEEEK).

It belongs to the RxLR effector family.

Its subcellular location is the secreted. The protein resides in the host nucleus. It is found in the host cytoplasm. Secreted effector that completely suppresses the host cell death induced by cell death-inducing proteins. The polypeptide is Secreted RxLR effector protein 48 (Plasmopara viticola (Downy mildew of grapevine)).